The primary structure comprises 79 residues: MORN repeat-containing protein 2 (79 aa).

MORN repeat units follow at residues 15–36 (YEGQFKDNMFHGLGTYTFPNGA) and 38–55 (YTGNFNENRVEGEGEYTD).

The protein localises to the cytoplasmic vesicle. It is found in the secretory vesicle. Its subcellular location is the acrosome. The protein resides in the nucleus. Its function is as follows. Might have a role in spermatogenesis. This chain is MORN repeat-containing protein 2, found in Homo sapiens (Human).